We begin with the raw amino-acid sequence, 214 residues long: Redox-sensing transcriptional repressor Rex (214 aa).

Residues 17–56 constitute a DNA-binding region (H-T-H motif); that stretch reads KYHRYLEELLKSDVDRISSKELSEKIGFTASQIRQDLNCF. NAD(+) is bound at residue 91-96; it reads GAGNIG.

This sequence belongs to the transcriptional regulatory Rex family. In terms of assembly, homodimer.

Its subcellular location is the cytoplasm. Functionally, modulates transcription in response to changes in cellular NADH/NAD(+) redox state. The polypeptide is Redox-sensing transcriptional repressor Rex (Clostridium acetobutylicum (strain ATCC 824 / DSM 792 / JCM 1419 / IAM 19013 / LMG 5710 / NBRC 13948 / NRRL B-527 / VKM B-1787 / 2291 / W)).